The sequence spans 284 residues: Putative thiosulfate sulfurtransferase SseB (284 aa).

Rhodanese domains lie at 20 to 138 (AGDP…SIET) and 169 to 280 (GAGG…RPVG). Residue R183 participates in substrate binding. The active-site Cysteine persulfide intermediate is the C241.

The catalysed reaction is thiosulfate + hydrogen cyanide = thiocyanate + sulfite + 2 H(+). In Mycobacterium tuberculosis (strain CDC 1551 / Oshkosh), this protein is Putative thiosulfate sulfurtransferase SseB (sseB).